The sequence spans 640 residues: Threonine--tRNA ligase (640 aa).

The TGS domain maps to 1–61; sequence MPIITLPDGS…TNDAEIQIIT (61 aa). Positions 242 to 533 are catalytic; sequence DHRKLGKKLS…LIENYSGNLP (292 aa). Zn(2+) contacts are provided by C333, H384, and H510.

This sequence belongs to the class-II aminoacyl-tRNA synthetase family. As to quaternary structure, homodimer. Requires Zn(2+) as cofactor.

The protein resides in the cytoplasm. It catalyses the reaction tRNA(Thr) + L-threonine + ATP = L-threonyl-tRNA(Thr) + AMP + diphosphate + H(+). Functionally, catalyzes the attachment of threonine to tRNA(Thr) in a two-step reaction: L-threonine is first activated by ATP to form Thr-AMP and then transferred to the acceptor end of tRNA(Thr). Also edits incorrectly charged L-seryl-tRNA(Thr). The polypeptide is Threonine--tRNA ligase (Prochlorococcus marinus (strain NATL1A)).